A 603-amino-acid chain; its full sequence is UPF0313 protein MJ1155 (603 aa).

The 273-residue stretch at 285 to 557 folds into the Radical SAM core domain; it reads GIVPVQFSVV…KIQKAICLYR (273 aa). The [4Fe-4S] cluster site is built by Cys299, Cys303, and Cys306.

Belongs to the UPF0313 family. The cofactor is [4Fe-4S] cluster.

This chain is UPF0313 protein MJ1155, found in Methanocaldococcus jannaschii (strain ATCC 43067 / DSM 2661 / JAL-1 / JCM 10045 / NBRC 100440) (Methanococcus jannaschii).